The primary structure comprises 463 residues: Carnosine N-methyltransferase (463 aa).

Disordered stretches follow at residues 1–64 (MTKN…SQLK) and 79–104 (KHNHDHSHDHNHDYDDNNEDDEEKEE). Residues 9 to 58 (KSNNSNISNNNNNNNNNNNNNNNNNNNNNNNNNNNNNNNNNNNNNNNNKN) are compositionally biased toward low complexity. Over residues 79 to 93 (KHNHDHSHDHNHDYD) the composition is skewed to basic and acidic residues. Over residues 94-103 (DNNEDDEEKE) the composition is skewed to acidic residues. Residues Gln215, Arg218, Gly260, Glu281, Asp351, Phe352, and Cys367 each coordinate S-adenosyl-L-methionine. Asp371 provides a ligand contact to carnosine. Tyr379 serves as a coordination point for S-adenosyl-L-methionine. Carnosine is bound by residues His402 and Tyr450.

The protein belongs to the carnosine N-methyltransferase family.

The enzyme catalyses carnosine + S-adenosyl-L-methionine = anserine + S-adenosyl-L-homocysteine + H(+). Its function is as follows. N-methyltransferase that mediates the formation of anserine (beta-alanyl-N(Pi)-methyl-L-histidine) from carnosine. This is Carnosine N-methyltransferase from Dictyostelium discoideum (Social amoeba).